The chain runs to 268 residues: D-alanyl-D-alanine carboxypeptidase (268 aa).

A helical transmembrane segment spans residues 25-47; the sequence is AFLWAFIISFTVCTLFLGWRLVS. Residues glutamine 151, 179–181, and serine 186 contribute to the substrate site; that span reads WVA. Residues histidine 188 and aspartate 195 each contribute to the Zn(2+) site. Glutamate 238 functions as the Proton donor/acceptor in the catalytic mechanism. Histidine 241 contributes to the Zn(2+) binding site.

The protein belongs to the peptidase M15B family. As to quaternary structure, monomer. Requires Zn(2+) as cofactor.

It localises to the cell membrane. Carboxypeptidase activity is insensitive to beta-lactams since it is not affected by penicillin G or ampicillin and is inhibited only by very high concentrations of cefalotin and cefoxitin. Its function is as follows. Carboxypeptidase that cleaves the C-terminal D-alanine residue from the peptidoglycan-derived pentapeptide L-Ala-gamma-D-Glu-L-Lys-D-Ala-D-Ala in vitro. Therefore, should contribute in vivo to the hydrolysis of the D-alanyl-D-alanine-containing peptidoglycan precursors. May increase the level of glycopeptide antibiotics resistance by decreasing the availability of D-Ala-D-Ala termini from the cell surface, which constitute the antibiotic target residues. This is D-alanyl-D-alanine carboxypeptidase from Enterococcus faecalis (strain ATCC 700802 / V583).